Consider the following 299-residue polypeptide: Probable lipid kinase YegS (299 aa).

The 132-residue stretch at 2 to 133 (AEFPASLLIL…IDMAQVNKQT (132 aa)) folds into the DAGKc domain. ATP-binding positions include Thr-40, 66-72 (GDGTINE), and Thr-95. Mg(2+) is bound by residues Leu-215, Asp-218, and Leu-220. Glu-271 (proton acceptor) is an active-site residue.

It belongs to the diacylglycerol/lipid kinase family. YegS lipid kinase subfamily. The cofactor is Mg(2+). Ca(2+) serves as cofactor.

The protein localises to the cytoplasm. Probably phosphorylates lipids; the in vivo substrate is unknown. In Shigella flexneri, this protein is Probable lipid kinase YegS.